Consider the following 237-residue polypeptide: MALPLLEYKPTTQNQRVQSFGTADVNEDTPYIYRLENANSPSEIEELIWAAYRQVFNEQEILKFNRQIGLETQLKNRSITVKDFIRGLAKSERFYQLVVTPNNNYRLVEMSLKRLLGRSPYNEEEKIAWSIQIASKGWGGFVDALIDSTEYEQAFGDNTVPYQRKRLTTDRPFSFTPRYGADYRDRAGIVRPGRMSNWNNSANQNYDGVAILGVLLAISAGMTFLFVLNWLGISSSF.

In terms of domain architecture, PBS-linker spans 11–191 (TTQNQRVQSF…DYRDRAGIVR (181 aa)). A helical membrane pass occupies residues 208–228 (GVAILGVLLAISAGMTFLFVL).

It belongs to the phycobilisome linker protein family. Part of a specialized phycobilisome (PBS), a structure that is usually composed of two distinct substructures: a core complex and a number of rods radiating from the core. This protein is part of a core-less PBS rod (called CpcL-PBS). In vegetative cells associated substoichiometrically with photosystem I and phycobiliproteins phycocyanin as well as phycoerythrocyanin in the thylakoid membrane, not found in conventional, hemidiscoidal phycobilisomes.

It localises to the cellular thylakoid membrane. Its function is as follows. Rod linker protein, associated with phycocyanin (PC). Linker polypeptides determine the state of aggregation and the location of the disk-shaped phycobiliprotein units within the phycobilisome (PBS) and modulate their spectroscopic properties in order to mediate a directed and optimal energy transfer. Forms a supercomplex with tetrameric photosystem I (PSI) and PC that allows efficient energy transfer from PC to PSI. This protein seems to be in the middle of the PC hexameric rod and may anchor the PC rods at the periphery of PSI tetramers. May be involved in the cyclic electron transport around PSI that provides ATP needed for N(2) fixation in heterocysts. This chain is Photosystem I-associated linker protein CpcL, found in Nostoc sp. (strain PCC 7120 / SAG 25.82 / UTEX 2576).